Here is a 113-residue protein sequence, read N- to C-terminus: MQAKAVARTVRIAPRKVRLVVDLIRGKQVGEAIAILNHTPKTASPVVEKVLKSAIANAEHNYEMDINNLVVEKVFVDEGPTLKRFRPRAMGRASQINKRTSHITVVVSEKKEG.

It belongs to the universal ribosomal protein uL22 family. Part of the 50S ribosomal subunit.

Functionally, this protein binds specifically to 23S rRNA; its binding is stimulated by other ribosomal proteins, e.g. L4, L17, and L20. It is important during the early stages of 50S assembly. It makes multiple contacts with different domains of the 23S rRNA in the assembled 50S subunit and ribosome. Its function is as follows. The globular domain of the protein is located near the polypeptide exit tunnel on the outside of the subunit, while an extended beta-hairpin is found that lines the wall of the exit tunnel in the center of the 70S ribosome. In Bacillus cereus (strain ATCC 10987 / NRS 248), this protein is Large ribosomal subunit protein uL22.